A 252-amino-acid chain; its full sequence is Pyridoxine 5'-phosphate synthase (252 aa).

Residues Asn-8 and Arg-19 each coordinate 3-amino-2-oxopropyl phosphate. Residue His-44 is the Proton acceptor of the active site. 1-deoxy-D-xylulose 5-phosphate-binding residues include Arg-46 and His-51. Catalysis depends on Glu-75, which acts as the Proton acceptor. Thr-110 contacts 1-deoxy-D-xylulose 5-phosphate. His-201 acts as the Proton donor in catalysis. 3-amino-2-oxopropyl phosphate contacts are provided by residues Asp-202 and Gly-224 to His-225.

It belongs to the PNP synthase family. In terms of assembly, homooctamer; tetramer of dimers.

The protein resides in the cytoplasm. The enzyme catalyses 3-amino-2-oxopropyl phosphate + 1-deoxy-D-xylulose 5-phosphate = pyridoxine 5'-phosphate + phosphate + 2 H2O + H(+). Its pathway is cofactor biosynthesis; pyridoxine 5'-phosphate biosynthesis; pyridoxine 5'-phosphate from D-erythrose 4-phosphate: step 5/5. Functionally, catalyzes the complicated ring closure reaction between the two acyclic compounds 1-deoxy-D-xylulose-5-phosphate (DXP) and 3-amino-2-oxopropyl phosphate (1-amino-acetone-3-phosphate or AAP) to form pyridoxine 5'-phosphate (PNP) and inorganic phosphate. The chain is Pyridoxine 5'-phosphate synthase from Albidiferax ferrireducens (strain ATCC BAA-621 / DSM 15236 / T118) (Rhodoferax ferrireducens).